The following is a 130-amino-acid chain: Small ribosomal subunit protein uS11 (130 aa).

It belongs to the universal ribosomal protein uS11 family. Part of the 30S ribosomal subunit. Interacts with proteins S7 and S18. Binds to IF-3.

Its function is as follows. Located on the platform of the 30S subunit, it bridges several disparate RNA helices of the 16S rRNA. Forms part of the Shine-Dalgarno cleft in the 70S ribosome. The polypeptide is Small ribosomal subunit protein uS11 (Campylobacter jejuni subsp. jejuni serotype O:6 (strain 81116 / NCTC 11828)).